A 532-amino-acid chain; its full sequence is Arginine--tRNA ligase (532 aa).

Positions 122–132 match the 'HIGH' region motif; sequence ANPTGPLHVAS.

It belongs to the class-I aminoacyl-tRNA synthetase family. As to quaternary structure, monomer.

It localises to the cytoplasm. The catalysed reaction is tRNA(Arg) + L-arginine + ATP = L-arginyl-tRNA(Arg) + AMP + diphosphate. The sequence is that of Arginine--tRNA ligase from Elusimicrobium minutum (strain Pei191).